The following is a 424-amino-acid chain: Serine--tRNA ligase (424 aa).

233 to 235 (TAE) serves as a coordination point for L-serine. An ATP-binding site is contributed by 264 to 266 (RRE). E287 serves as a coordination point for L-serine. An ATP-binding site is contributed by 351–354 (EISS). Position 387 (S387) interacts with L-serine.

It belongs to the class-II aminoacyl-tRNA synthetase family. Type-1 seryl-tRNA synthetase subfamily. As to quaternary structure, homodimer. The tRNA molecule binds across the dimer.

The protein localises to the cytoplasm. It catalyses the reaction tRNA(Ser) + L-serine + ATP = L-seryl-tRNA(Ser) + AMP + diphosphate + H(+). The catalysed reaction is tRNA(Sec) + L-serine + ATP = L-seryl-tRNA(Sec) + AMP + diphosphate + H(+). It participates in aminoacyl-tRNA biosynthesis; selenocysteinyl-tRNA(Sec) biosynthesis; L-seryl-tRNA(Sec) from L-serine and tRNA(Sec): step 1/1. Its function is as follows. Catalyzes the attachment of serine to tRNA(Ser). Is also able to aminoacylate tRNA(Sec) with serine, to form the misacylated tRNA L-seryl-tRNA(Sec), which will be further converted into selenocysteinyl-tRNA(Sec). The polypeptide is Serine--tRNA ligase (Cyanothece sp. (strain PCC 7425 / ATCC 29141)).